The sequence spans 533 residues: D-3-phosphoglycerate dehydrogenase (533 aa).

Alanine 2 is subject to N-acetylalanine. Phosphoserine is present on serine 14. Position 21 is an N6-acetyllysine; alternate (lysine 21). Residue lysine 21 forms a Glycyl lysine isopeptide (Lys-Gly) (interchain with G-Cter in SUMO1); alternate linkage. Lysine 21 is covalently cross-linked (Glycyl lysine isopeptide (Lys-Gly) (interchain with G-Cter in SUMO2); alternate). Residue lysine 58 is modified to N6-acetyllysine. NAD(+) is bound by residues threonine 78, 155 to 156, aspartate 175, threonine 207, 234 to 236, and aspartate 260; these read RI and CAR. Threonine 78 carries the phosphothreonine modification. Residue arginine 236 is part of the active site. Glutamate 265 is a catalytic residue. The active-site Proton donor is histidine 283. Position 283-286 (283-286) interacts with NAD(+); that stretch reads HLGA.

This sequence belongs to the D-isomer specific 2-hydroxyacid dehydrogenase family. Homotetramer.

The enzyme catalyses (2R)-3-phosphoglycerate + NAD(+) = 3-phosphooxypyruvate + NADH + H(+). The catalysed reaction is (R)-2-hydroxyglutarate + NAD(+) = 2-oxoglutarate + NADH + H(+). It catalyses the reaction (S)-malate + NAD(+) = oxaloacetate + NADH + H(+). It participates in amino-acid biosynthesis; L-serine biosynthesis; L-serine from 3-phospho-D-glycerate: step 1/3. Functionally, catalyzes the reversible oxidation of 3-phospho-D-glycerate to 3-phosphonooxypyruvate, the first step of the phosphorylated L-serine biosynthesis pathway. Also catalyzes the reversible oxidation of 2-hydroxyglutarate to 2-oxoglutarate and the reversible oxidation of (S)-malate to oxaloacetate. The chain is D-3-phosphoglycerate dehydrogenase (PHGDH) from Pongo abelii (Sumatran orangutan).